The sequence spans 209 residues: Large ribosomal subunit protein uL4 (209 aa).

The interval 47–72 (TSSTKTRSEVRGSSKKPWKQKGTGRA) is disordered. Basic residues predominate over residues 59 to 72 (SSKKPWKQKGTGRA).

The protein belongs to the universal ribosomal protein uL4 family. In terms of assembly, part of the 50S ribosomal subunit.

Its function is as follows. One of the primary rRNA binding proteins, this protein initially binds near the 5'-end of the 23S rRNA. It is important during the early stages of 50S assembly. It makes multiple contacts with different domains of the 23S rRNA in the assembled 50S subunit and ribosome. Functionally, forms part of the polypeptide exit tunnel. The sequence is that of Large ribosomal subunit protein uL4 from Borreliella burgdorferi (strain ZS7) (Borrelia burgdorferi).